Reading from the N-terminus, the 289-residue chain is tRNA(Ile)-lysidine synthase (289 aa).

11–16 (SGGPDS) contributes to the ATP binding site.

The protein belongs to the tRNA(Ile)-lysidine synthase family.

The protein resides in the cytoplasm. It catalyses the reaction cytidine(34) in tRNA(Ile2) + L-lysine + ATP = lysidine(34) in tRNA(Ile2) + AMP + diphosphate + H(+). In terms of biological role, ligates lysine onto the cytidine present at position 34 of the AUA codon-specific tRNA(Ile) that contains the anticodon CAU, in an ATP-dependent manner. Cytidine is converted to lysidine, thus changing the amino acid specificity of the tRNA from methionine to isoleucine. The chain is tRNA(Ile)-lysidine synthase from Mycoplasma pneumoniae (strain ATCC 29342 / M129 / Subtype 1) (Mycoplasmoides pneumoniae).